Reading from the N-terminus, the 536-residue chain is uncharacterized protein (536 aa).

One can recognise a Radical SAM core domain in the interval 163 to 394; the sequence is LDAYDSMSVQ…MNFIPTRPLE (232 aa). The [4Fe-4S] cluster site is built by C177, C181, and C184.

The cofactor is [4Fe-4S] cluster.

This is an uncharacterized protein from Synechocystis sp. (strain ATCC 27184 / PCC 6803 / Kazusa).